The chain runs to 361 residues: Nicotinate-nucleotide--dimethylbenzimidazole phosphoribosyltransferase (361 aa).

Catalysis depends on E320, which acts as the Proton acceptor.

The protein belongs to the CobT family. As to quaternary structure, homodimer.

The enzyme catalyses 5,6-dimethylbenzimidazole + nicotinate beta-D-ribonucleotide = alpha-ribazole 5'-phosphate + nicotinate + H(+). The protein operates within nucleoside biosynthesis; alpha-ribazole biosynthesis; alpha-ribazole from 5,6-dimethylbenzimidazole: step 1/2. Functionally, catalyzes the synthesis of alpha-ribazole-5'-phosphate from nicotinate mononucleotide (NAMN) and 5,6-dimethylbenzimidazole (DMB). The protein is Nicotinate-nucleotide--dimethylbenzimidazole phosphoribosyltransferase of Shigella boydii serotype 18 (strain CDC 3083-94 / BS512).